Reading from the N-terminus, the 530-residue chain is Cytochrome P450 2U1 (530 aa).

Transmembrane regions (helical) follow at residues 21–41 (LQAV…DWVW), 99–119 (VYGN…LSDF), 247–267 (ICLH…YLPF), and 328–348 (LFYI…NSLL). A heme-binding site is contributed by Cys476. Residues 481–501 (LAKMELFLMFVSLMQSFTFAL) form a helical membrane-spanning segment.

It belongs to the cytochrome P450 family. It depends on heme as a cofactor. In terms of tissue distribution, specifically expressed in thymus and brain. In brain, expressed in cortex, cerebellum, olfactory bulbs, pons and medulla and the limbic structures (at protein level).

The protein resides in the endoplasmic reticulum membrane. The protein localises to the microsome membrane. Its subcellular location is the mitochondrion inner membrane. The enzyme catalyses an omega-methyl-long-chain fatty acid + reduced [NADPH--hemoprotein reductase] + O2 = an omega-hydroxy-long-chain fatty acid + oxidized [NADPH--hemoprotein reductase] + H2O + H(+). It catalyses the reaction (5Z,8Z,11Z,14Z)-eicosatetraenoate + reduced [NADPH--hemoprotein reductase] + O2 = 19-hydroxy-(5Z,8Z,11Z,14Z)-eicosatetraenoate + oxidized [NADPH--hemoprotein reductase] + H2O + H(+). The catalysed reaction is (5Z,8Z,11Z,14Z)-eicosatetraenoate + reduced [NADPH--hemoprotein reductase] + O2 = 20-hydroxy-(5Z,8Z,11Z,14Z)-eicosatetraenoate + oxidized [NADPH--hemoprotein reductase] + H2O + H(+). It carries out the reaction N-[(5Z,8Z,11Z,14Z)-eicosatetraenoyl]-serotonin + reduced [NADPH--hemoprotein reductase] + O2 = 2-oxo-N-[(5Z,8Z,11Z,14Z)-eicosatetraenoyl]-serotonin + oxidized [NADPH--hemoprotein reductase] + H2O + H(+). In terms of biological role, a cytochrome P450 monooxygenase involved in the metabolism of arachidonic acid and its conjugates. Mechanistically, uses molecular oxygen inserting one oxygen atom into a substrate, and reducing the second into a water molecule, with two electrons provided by NADPH via cytochrome P450 reductase (CPR; NADPH-ferrihemoprotein reductase). Acts as an omega and omega-1 hydroxylase for arachidonic acid and possibly for other long chain fatty acids. May modulate the arachidonic acid signaling pathway and play a role in other fatty acid signaling processes. May down-regulate the biological activities of N-arachidonoyl-serotonin, an endocannabinoid that has anti-nociceptive effects through inhibition of fatty acid amide hydrolase FAAH, TRPV1 receptor and T-type calcium channels. Catalyzes C-2 oxidation of the indole ring of N-arachidonoyl-serotonin forming a less active product 2-oxo-N-arachidonoyl-serotonin. This is Cytochrome P450 2U1 (Cyp2u1) from Rattus norvegicus (Rat).